The primary structure comprises 87 residues: MVGLSNGEIPLVQIFVRDNNVDQALKALKKKMQREGSFREMKRHVHYEKPSEKRARQKAEAVRRARKLARKRAQREGLLPMPKKPGR.

Residues 47–63 (YEKPSEKRARQKAEAVR) show a composition bias toward basic and acidic residues. Residues 47–87 (YEKPSEKRARQKAEAVRRARKLARKRAQREGLLPMPKKPGR) form a disordered region. Residues 64–73 (RARKLARKRA) show a composition bias toward basic residues.

This sequence belongs to the bacterial ribosomal protein bS21 family.

The polypeptide is Small ribosomal subunit protein bS21 (Caulobacter vibrioides (strain ATCC 19089 / CIP 103742 / CB 15) (Caulobacter crescentus)).